The chain runs to 259 residues: uncharacterized protein (259 aa).

An ABC transporter domain is found at 4–243 (INLKNINLTR…KILTDFYQEK (240 aa)). Residue 36–43 (GLNGSGKS) participates in ATP binding.

Belongs to the ABC transporter superfamily.

This is an uncharacterized protein from Lactococcus lactis subsp. lactis (strain IL1403) (Streptococcus lactis).